The following is a 161-amino-acid chain: Regulator of ribonuclease activity A (161 aa).

It belongs to the RraA family. Homotrimer. Binds to both RNA-binding sites in the C-terminal region of Rne and to RhlB.

It localises to the cytoplasm. In terms of biological role, globally modulates RNA abundance by binding to RNase E (Rne) and regulating its endonucleolytic activity. Can modulate Rne action in a substrate-dependent manner by altering the composition of the degradosome. Modulates RNA-binding and helicase activities of the degradosome. The polypeptide is Regulator of ribonuclease activity A (Shigella dysenteriae serotype 1 (strain Sd197)).